Reading from the N-terminus, the 120-residue chain is MFNKENRQKARVKRHLRVRNKISGTAARPRLAVYRSEKNIYAQIIDDVARITLVSASTLDKEFAEKVGSNKEAAKAVGTMVAKRALEKGIEEVVFDRGGYVYHGRVKELADAAREAGLKF.

It belongs to the universal ribosomal protein uL18 family. In terms of assembly, part of the 50S ribosomal subunit; part of the 5S rRNA/L5/L18/L25 subcomplex. Contacts the 5S and 23S rRNAs.

In terms of biological role, this is one of the proteins that bind and probably mediate the attachment of the 5S RNA into the large ribosomal subunit, where it forms part of the central protuberance. This is Large ribosomal subunit protein uL18 from Clostridium novyi (strain NT).